The chain runs to 129 residues: Flagellar assembly factor FliW (129 aa).

Belongs to the FliW family. As to quaternary structure, interacts with flagellins FlaA and FlaB but not with FlaC; recognizes glycosylated and non-glycosylated FlaA equally. Interacts with CsrA. May form a 3-way complex of flagellin, FliS and FliW simultaneously in which FliS and FliW do not directly interact.

The protein resides in the cytoplasm. Its function is as follows. Acts as an anti-CsrA protein, binds CsrA and prevents it from repressing translation of its target genes, one of which is flagellin. Binds to flagellin and participates in the assembly of the flagellum. Functionally, overexpression leads to increased levels of FlaA and FlaB, but levels of FlaC remain stable. Involved in post-transcriptional regulation of flagellin biosynthesis. The chain is Flagellar assembly factor FliW from Campylobacter jejuni subsp. jejuni serotype O:6 (strain 81116 / NCTC 11828).